A 563-amino-acid polypeptide reads, in one-letter code: Cytochrome P450 monooxygenase phqL (563 aa).

The next 3 helical transmembrane spans lie at 20–40 (ENFS…IIIF), 52–72 (IPVG…FVPG), and 80–100 (ALWL…VSIL). An N-linked (GlcNAc...) asparagine glycan is attached at N279. The chain crosses the membrane as a helical span at residues 362 to 382 (LVIFAGSGTVAVTIIGCLYFL). N-linked (GlcNAc...) asparagine glycosylation is present at N419. C502 is a heme binding site.

The protein belongs to the cytochrome P450 family. Heme is required as a cofactor.

It is found in the membrane. It participates in alkaloid biosynthesis. Its function is as follows. Cytochrome P450 monooxygenase; part of the gene cluster that mediates the biosynthesis of paraherquamide, a fungal indole alkaloid that belongs to a family of natural products containing a characteristic bicyclo[2.2.2]diazaoctane core. The first steps in the biosynthesis of paraherquamide is the production of the beta-methyl-proline precursor from L-isoleucine. They require oxidation of a terminally hydroxylated L-isoleucine to the corresponding aldehyde by enzymes which have still to be identified. Spontaneous cyclization and dehydration would yield the 4-methyl pyrolline-5-carboxylic acid, which is then reduced by the pyrroline-5-carboxylate reductase phqD leading to the beta-methyl-proline precursor. The next step of paraherquamide biosynthesis involves coupling of beta-methyl-proline and L-tryptophan by the bimodular NRPS phqB, to produce a monooxopiperazine intermediate. The reductase (R) domain of phqB utilizes NADPH for hydride transfer to reduce the thioester bond of the T domain-tethered linear dipeptide to a hemithioaminal intermediate, which spontaneously cleaves the C-S bond to release the aldehyde product. This compound undergoes spontaneous cyclization and dehydration to give a dienamine which is reverse prenylated at C-2 by the reverse prenyltransferase phqJ. The other prenyltransferase present in the cluster, phqI may be a redundant gene in the pathway. During biosynthetic assembly, the key step to produce the polycyclic core is catalyzed by the bifunctional reductase and intramolecular [4+2] Diels-Alderase, phqE, resulting in formation of the [2.2.2] diazaoctane intermediate preparaherquamide. Following formation of preparaherquamide, an indole 2,3-epoxidation-initiated pinacol-like rearrangement is catalyzed by the phqK FAD-dependent monooxygenase. The prenyltransferase phqA, the cytochrome P450 monooxygenase phqL, and the FAD-linked oxidoreductase phqH (or the cytochrome P450 monooxygenase phqM), are proposed to be involved in the formation of the pyran ring. The FAD-dependent monooxygenase phqK is likely responsible for generation of the spiro-oxindole, and the N-methylation is likely mediated by the phqN methyltransferase leading to the isolable natural product paraherquamide F. However, the order of these biosynthetic steps has still to be determined. In late-stage paraherquamide biosynthesis, the third P450 monooxygenase, phqO, is probably responsible for the C-14 hydroxylation, transforming paraherquamide F to paraherquamide G, and paraherquamide E to the final product paraherquamide A. The expansion from the 6-membered ring pyran (in paraherquamides F and G) to the 7-membered dioxepin ring (in paraherquamides A and E) represents a poorly understood but intriguing process that probably involves the 2-oxoglutarate-dependent dioxygenase phqC. Finally, the remaining members of the paraherquamide cluster, including phqI as well as phqM (or phqH), do not have a clearly prescribed role and appear to be redundant. The sequence is that of Cytochrome P450 monooxygenase phqL from Penicillium fellutanum.